The primary structure comprises 170 residues: MAQMVAGDQDAGTLWVPSQSESQTESDISTQSLRKPTMSYVILKTLADKRVHNCVSLATLKKAVSITGYNMTHNTWRFKRVLQNLLDKGMIMHVTCCKGASGSLCLCKERALKSNHRAKRCQDRQKSQKPQKPGQRESEPCQLLLSSKKKNDQLFKGVRRVAKGNRHCHY.

The H15 domain occupies 34 to 108 (RKPTMSYVIL…GASGSLCLCK (75 aa)). Position 56 is a phosphoserine (Ser-56). The segment at 118-140 (AKRCQDRQKSQKPQKPGQRESEP) is disordered.

Belongs to the histone H1/H5 family. In terms of tissue distribution, expressed exclusively in the testis by haploid germ cells (at protein level).

Its subcellular location is the nucleus. The protein localises to the chromosome. In terms of biological role, DNA-binding protein that may be implicated in chromatin remodeling and/or transcriptional regulation during spermiogenesis, the process of spermatid maturation into spermatozoa. This Mus musculus (Mouse) protein is Histone H1.9.